Here is a 276-residue protein sequence, read N- to C-terminus: Digeranylgeranylglyceryl phosphate synthase (276 aa).

The next 8 membrane-spanning stretches (helical) occupy residues 12 to 34 (PHNC…GSVP), 38 to 60 (ILIL…NDYF), 84 to 104 (ALWY…LISL), 107 to 127 (FAFA…LKPL), 146 to 166 (GAIA…AFLV), 202 to 222 (VAAF…KAGV), 224 to 244 (VGYY…YLIL), and 256 to 276 (QLLL…AALM).

This sequence belongs to the UbiA prenyltransferase family. DGGGP synthase subfamily. Mg(2+) is required as a cofactor.

Its subcellular location is the cell membrane. The enzyme catalyses sn-3-O-(geranylgeranyl)glycerol 1-phosphate + (2E,6E,10E)-geranylgeranyl diphosphate = 2,3-bis-O-(geranylgeranyl)-sn-glycerol 1-phosphate + diphosphate. The protein operates within membrane lipid metabolism; glycerophospholipid metabolism. Its function is as follows. Prenyltransferase that catalyzes the transfer of the geranylgeranyl moiety of geranylgeranyl diphosphate (GGPP) to the C2 hydroxyl of (S)-3-O-geranylgeranylglyceryl phosphate (GGGP). This reaction is the second ether-bond-formation step in the biosynthesis of archaeal membrane lipids. In Thermococcus gammatolerans (strain DSM 15229 / JCM 11827 / EJ3), this protein is Digeranylgeranylglyceryl phosphate synthase.